We begin with the raw amino-acid sequence, 274 residues long: tRNA pseudouridine synthase A (274 aa).

D51 acts as the Nucleophile in catalysis. Residue Y109 coordinates substrate.

Belongs to the tRNA pseudouridine synthase TruA family. As to quaternary structure, homodimer.

It catalyses the reaction uridine(38/39/40) in tRNA = pseudouridine(38/39/40) in tRNA. Formation of pseudouridine at positions 38, 39 and 40 in the anticodon stem and loop of transfer RNAs. The chain is tRNA pseudouridine synthase A from Acidovorax ebreus (strain TPSY) (Diaphorobacter sp. (strain TPSY)).